The chain runs to 283 residues: NAD kinase (283 aa).

Asp66 functions as the Proton acceptor in the catalytic mechanism. Residues 66-67, Arg71, 137-138, His165, Asp167, and 178-183 contribute to the NAD(+) site; these read DG, ND, and TGYSMS.

It belongs to the NAD kinase family. The cofactor is a divalent metal cation.

The protein localises to the cytoplasm. It catalyses the reaction NAD(+) + ATP = ADP + NADP(+) + H(+). In terms of biological role, involved in the regulation of the intracellular balance of NAD and NADP, and is a key enzyme in the biosynthesis of NADP. Catalyzes specifically the phosphorylation on 2'-hydroxyl of the adenosine moiety of NAD to yield NADP. This is NAD kinase from Agathobacter rectalis (strain ATCC 33656 / DSM 3377 / JCM 17463 / KCTC 5835 / VPI 0990) (Eubacterium rectale).